Reading from the N-terminus, the 227-residue chain is Zinc finger protein 511 (227 aa).

C2H2-type zinc fingers lie at residues 80–105 (FTCQ…HMMH), 107–130 (NTCS…LEWH), and 144–169 (YQCL…VRLH). The segment at 180 to 204 (PKTNRGPAMPAAADAATRAPTDDSD) is disordered. The segment covering 186 to 198 (PAMPAAADAATRA) has biased composition (low complexity).

Belongs to the krueppel C2H2-type zinc-finger protein family.

The protein localises to the nucleus. Its function is as follows. May be involved in transcriptional regulation. This chain is Zinc finger protein 511 (Znf511), found in Mus musculus (Mouse).